The following is a 344-amino-acid chain: Arginine N-succinyltransferase (344 aa).

Leu125 contacts succinyl-CoA. His229 serves as the catalytic Proton donor.

Belongs to the arginine N-succinyltransferase family.

The catalysed reaction is succinyl-CoA + L-arginine = N(2)-succinyl-L-arginine + CoA + H(+). It functions in the pathway amino-acid degradation; L-arginine degradation via AST pathway; L-glutamate and succinate from L-arginine: step 1/5. In terms of biological role, catalyzes the transfer of succinyl-CoA to arginine to produce N(2)-succinylarginine. This chain is Arginine N-succinyltransferase, found in Shigella flexneri.